Reading from the N-terminus, the 295-residue chain is Tyrosine recombinase XerD (295 aa).

Residues 1–85 enclose the Core-binding (CB) domain; that stretch reads METIIEEYLK…TIRSFHQFAL (85 aa). The 184-residue stretch at 106-289 folds into the Tyr recombinase domain; it reads KLPDVLDVEE…SKTQIRQMYN (184 aa). Residues Arg-146, Lys-170, His-241, Arg-244, and His-267 contribute to the active site. Tyr-276 functions as the O-(3'-phospho-DNA)-tyrosine intermediate in the catalytic mechanism.

This sequence belongs to the 'phage' integrase family. XerD subfamily. As to quaternary structure, forms a cyclic heterotetrameric complex composed of two molecules of XerC and two molecules of XerD.

The protein localises to the cytoplasm. Site-specific tyrosine recombinase, which acts by catalyzing the cutting and rejoining of the recombining DNA molecules. The XerC-XerD complex is essential to convert dimers of the bacterial chromosome into monomers to permit their segregation at cell division. It also contributes to the segregational stability of plasmids. This chain is Tyrosine recombinase XerD, found in Staphylococcus haemolyticus (strain JCSC1435).